We begin with the raw amino-acid sequence, 307 residues long: Elongation factor Ts (307 aa).

Residues 80 to 83 (TDFV) are involved in Mg(2+) ion dislocation from EF-Tu.

It belongs to the EF-Ts family.

It is found in the cytoplasm. Associates with the EF-Tu.GDP complex and induces the exchange of GDP to GTP. It remains bound to the aminoacyl-tRNA.EF-Tu.GTP complex up to the GTP hydrolysis stage on the ribosome. In Clostridium botulinum (strain Loch Maree / Type A3), this protein is Elongation factor Ts.